The chain runs to 231 residues: ATP-dependent dethiobiotin synthetase BioD (231 aa).

12–17 is an ATP binding site; sequence DVGKTV. Mg(2+) is bound at residue threonine 16. Lysine 37 is a catalytic residue. Residue threonine 41 participates in substrate binding. ATP contacts are provided by residues aspartate 50, 109-112, 170-171, and 200-202; these read EGAG, GS, and PAG. Residues aspartate 50 and glutamate 109 each contribute to the Mg(2+) site.

The protein belongs to the dethiobiotin synthetase family. Homodimer. Requires Mg(2+) as cofactor.

It localises to the cytoplasm. It carries out the reaction (7R,8S)-7,8-diammoniononanoate + CO2 + ATP = (4R,5S)-dethiobiotin + ADP + phosphate + 3 H(+). It functions in the pathway cofactor biosynthesis; biotin biosynthesis; biotin from 7,8-diaminononanoate: step 1/2. Functionally, catalyzes a mechanistically unusual reaction, the ATP-dependent insertion of CO2 between the N7 and N8 nitrogen atoms of 7,8-diaminopelargonic acid (DAPA, also called 7,8-diammoniononanoate) to form a ureido ring. This chain is ATP-dependent dethiobiotin synthetase BioD, found in Rhodococcus jostii (strain RHA1).